The chain runs to 723 residues: Catalase-peroxidase (723 aa).

A cross-link (tryptophyl-tyrosyl-methioninium (Trp-Tyr) (with M-238)) is located at residues 89 to 212; it reads WHSAGTYRTG…LAAVQMGLIY (124 aa). H90 functions as the Proton acceptor in the catalytic mechanism. A cross-link (tryptophyl-tyrosyl-methioninium (Tyr-Met) (with W-89)) is located at residues 212 to 238; sequence YVNPEGPNGDPDPFAAAVDIRETFARM. H253 is a binding site for heme b.

The protein belongs to the peroxidase family. Peroxidase/catalase subfamily. Homodimer or homotetramer. Requires heme b as cofactor. In terms of processing, formation of the three residue Trp-Tyr-Met cross-link is important for the catalase, but not the peroxidase activity of the enzyme.

The enzyme catalyses H2O2 + AH2 = A + 2 H2O. The catalysed reaction is 2 H2O2 = O2 + 2 H2O. In terms of biological role, bifunctional enzyme with both catalase and broad-spectrum peroxidase activity. The chain is Catalase-peroxidase from Shewanella baltica (strain OS185).